A 115-amino-acid polypeptide reads, in one-letter code: uncharacterized protein (115 aa).

The first 29 residues, 1–29 (MKKAMAILAVLAAAAVICGLLFFHNDVTD), serve as a signal peptide directing secretion.

This is an uncharacterized protein from Bacillus subtilis (strain 168).